Here is a 156-residue protein sequence, read N- to C-terminus: Small ribosomal subunit protein uS7 (156 aa).

The protein belongs to the universal ribosomal protein uS7 family. In terms of assembly, part of the 30S ribosomal subunit. Contacts proteins S9 and S11.

One of the primary rRNA binding proteins, it binds directly to 16S rRNA where it nucleates assembly of the head domain of the 30S subunit. Is located at the subunit interface close to the decoding center, probably blocks exit of the E-site tRNA. The sequence is that of Small ribosomal subunit protein uS7 from Ruminiclostridium cellulolyticum (strain ATCC 35319 / DSM 5812 / JCM 6584 / H10) (Clostridium cellulolyticum).